A 288-amino-acid polypeptide reads, in one-letter code: Type II iodothyronine deiodinase (288 aa).

Residues 1–5 (MPHVN) lie on the Lumenal side of the membrane. The helical; Signal-anchor for type III membrane protein transmembrane segment at 6 to 26 (LLVVLLILPGVFSNCLFLALY) threads the bilayer. Residues 27–288 (DAVSFLRRAL…SFLESVKASR (262 aa)) lie on the Cytoplasmic side of the membrane. The interval 99-130 (SCAASSSSSHETPTPRTTAEAAATVTTSTTTT) is disordered. Sec-160 is a catalytic residue. A non-standard amino acid (selenocysteine) is located at residue Sec-160.

The protein belongs to the iodothyronine deiodinase family. As to quaternary structure, predominantly monomer. Can form homodimers but homodimerization is not essential for enzyme activity. As to expression, expressed in intestine, liver, kidney and brain of immediately premetamorphic larvae, of larvae in all stages of metamorphosis and of parasitic feeding juveniles. In immediately premetamorphic larvae, levels are significantly higher in intestine and liver than in kidney and brain.

The protein localises to the endoplasmic reticulum membrane. It catalyses the reaction 3,3',5-triiodo-L-thyronine + iodide + A + H(+) = L-thyroxine + AH2. It carries out the reaction 3,3'-diiodo-L-thyronine + iodide + A + H(+) = 3,3',5'-triiodo-L-thyronine + AH2. The enzyme catalyses 3'-iodo-L-thyronine + iodide + A + H(+) = 3',5'-diiodo-L-thyronine + AH2. The catalysed reaction is 3,3'-diiodothyronamine + iodide + A + H(+) = 3,3',5'-triiodothyronamine + AH2. It catalyses the reaction 3'-iodothyronamine + iodide + A + H(+) = 3',5'-diiodothyronamine + AH2. Functionally, plays a crucial role in the metabolism of thyroid hormones (TH) and has specific roles in TH activation and inactivation by deiodination. Catalyzes the deiodination of L-thyroxine (T4) to 3,5,3'-triiodothyronine (T3), 3,3',5'-triiodothyronine (rT3) to 3,3'-diiodothyronine (3,3'-T2) and 3',5'-diiodothyronine (3',5'-T2) to 3'-monoiodothyronine (3'-T1) via outer-ring deiodination (ORD). Catalyzes the phenolic ring deiodinations of 3,3',5'-triiodothyronamine and 3',5'- diiodothyronamine. The sequence is that of Type II iodothyronine deiodinase from Petromyzon marinus (Sea lamprey).